Reading from the N-terminus, the 493-residue chain is Xylulose kinase (493 aa).

Residue 84 to 85 participates in substrate binding; the sequence is QH. D247 functions as the Proton acceptor in the catalytic mechanism.

This sequence belongs to the FGGY kinase family.

It carries out the reaction D-xylulose + ATP = D-xylulose 5-phosphate + ADP + H(+). Its function is as follows. Catalyzes the phosphorylation of D-xylulose to D-xylulose 5-phosphate. This is Xylulose kinase from Haemophilus influenzae (strain ATCC 51907 / DSM 11121 / KW20 / Rd).